The following is a 327-amino-acid chain: Clavesin-2 (327 aa).

One can recognise a CRAL-TRIO domain in the interval 96–257 (IKQALKDGFP…EFGGMLPPYD (162 aa)). A disordered region spans residues 288–327 (VDKELSPKSMKRSQSVVDPTALKRMDKSEEENMQPLLSLD). At S325 the chain carries Phosphoserine.

As to quaternary structure, forms a complex with clathrin heavy chain and gamma-adaptin. Expressed in brain with no expression detected in non-neuronal tissues (at protein level).

Its subcellular location is the golgi apparatus. The protein resides in the trans-Golgi network membrane. It localises to the early endosome membrane. The protein localises to the cytoplasmic vesicle. It is found in the clathrin-coated vesicle. In terms of biological role, required for normal morphology of late endosomes and/or lysosomes in neurons. Binds phosphatidylinositol 3,5-bisphosphate (PtdIns(3,5)P2). The protein is Clavesin-2 of Rattus norvegicus (Rat).